The chain runs to 273 residues: Small ribosomal subunit protein uS3 (273 aa).

Residues 43 to 111 (IRQLMSTGME…QVQLNILEVK (69 aa)) form the KH type-2 domain. Residues 218–227 (QQAAAAPSRG) show a composition bias toward low complexity. Residues 218–273 (QQAAAAPSRGRAGDRPGRPGGDRRRRNDRPAAEAAPAAVEAPAAEAAAPAAEGGQA) form a disordered region. Residues 228–239 (RAGDRPGRPGGD) are compositionally biased toward basic and acidic residues. Positions 249–273 (AEAAPAAVEAPAAEAAAPAAEGGQA) are enriched in low complexity.

The protein belongs to the universal ribosomal protein uS3 family. As to quaternary structure, part of the 30S ribosomal subunit. Forms a tight complex with proteins S10 and S14.

Functionally, binds the lower part of the 30S subunit head. Binds mRNA in the 70S ribosome, positioning it for translation. The chain is Small ribosomal subunit protein uS3 from Paenarthrobacter aurescens (strain TC1).